Reading from the N-terminus, the 342-residue chain is Biotin synthase (342 aa).

The 228-residue stretch at 63–290 (NTVQLSTLLS…GAMVRLSAGR (228 aa)) folds into the Radical SAM core domain. [4Fe-4S] cluster-binding residues include C78, C82, and C85. The [2Fe-2S] cluster site is built by C122, C153, C213, and R285.

This sequence belongs to the radical SAM superfamily. Biotin synthase family. In terms of assembly, homodimer. [4Fe-4S] cluster is required as a cofactor. It depends on [2Fe-2S] cluster as a cofactor.

The enzyme catalyses (4R,5S)-dethiobiotin + (sulfur carrier)-SH + 2 reduced [2Fe-2S]-[ferredoxin] + 2 S-adenosyl-L-methionine = (sulfur carrier)-H + biotin + 2 5'-deoxyadenosine + 2 L-methionine + 2 oxidized [2Fe-2S]-[ferredoxin]. The protein operates within cofactor biosynthesis; biotin biosynthesis; biotin from 7,8-diaminononanoate: step 2/2. Functionally, catalyzes the conversion of dethiobiotin (DTB) to biotin by the insertion of a sulfur atom into dethiobiotin via a radical-based mechanism. This chain is Biotin synthase, found in Cupriavidus pinatubonensis (strain JMP 134 / LMG 1197) (Cupriavidus necator (strain JMP 134)).